A 268-amino-acid polypeptide reads, in one-letter code: Undecaprenyl-diphosphatase (268 aa).

A run of 7 helical transmembrane segments spans residues 7-27 (IFNAIILGIVEGITEFFPISS), 87-107 (LIYHHIILGNIPIIFIGLCIY), 116-136 (FYSIIYALIFGTILLILTEIS), 146-166 (IETPQILIIGIFQCLALWPGF), 187-207 (VEFSFILSVPIFFGASVLDVI), 210-230 (FYDISINNIPMLFSGFLSAFI), and 247-267 (SLIPFIIYRSILSIIIYLFFM).

The protein belongs to the UppP family.

Its subcellular location is the cell membrane. The enzyme catalyses di-trans,octa-cis-undecaprenyl diphosphate + H2O = di-trans,octa-cis-undecaprenyl phosphate + phosphate + H(+). Functionally, catalyzes the dephosphorylation of undecaprenyl diphosphate (UPP). Confers resistance to bacitracin. The protein is Undecaprenyl-diphosphatase of Buchnera aphidicola subsp. Baizongia pistaciae (strain Bp).